Here is a 936-residue protein sequence, read N- to C-terminus: Protein translocase subunit SecA (936 aa).

ATP-binding positions include Gln-87, 105–109, and Asp-515; that span reads GEGKT. Residues Cys-920, Cys-922, Cys-931, and His-932 each coordinate Zn(2+).

This sequence belongs to the SecA family. Monomer and homodimer. Part of the essential Sec protein translocation apparatus which comprises SecA, SecYEG and auxiliary proteins SecDF-YajC and YidC. The cofactor is Zn(2+).

It is found in the cell inner membrane. The protein resides in the cytoplasm. The enzyme catalyses ATP + H2O + cellular proteinSide 1 = ADP + phosphate + cellular proteinSide 2.. Its function is as follows. Part of the Sec protein translocase complex. Interacts with the SecYEG preprotein conducting channel. Has a central role in coupling the hydrolysis of ATP to the transfer of proteins into and across the cell membrane, serving both as a receptor for the preprotein-SecB complex and as an ATP-driven molecular motor driving the stepwise translocation of polypeptide chains across the membrane. The polypeptide is Protein translocase subunit SecA (Paraburkholderia phytofirmans (strain DSM 17436 / LMG 22146 / PsJN) (Burkholderia phytofirmans)).